The following is a 471-amino-acid chain: Methyltransferase OMS1, mitochondrial (471 aa).

Residues 1–39 (MIVFRRFPTCLLHHIRQPASRSLLLESQRRSLSFTSYKY) constitute a mitochondrion transit peptide. Residues 40-103 (NSSHIDDDKS…AIARSEKFSK (64 aa)) are Mitochondrial matrix-facing. Residues 104 to 123 (GMTKYMIGAYVIFLIYGLFF) traverse the membrane as a helical segment. At 124–471 (TKKLFAKDKE…LEPVPPVSKS (348 aa)) the chain is on the mitochondrial intermembrane side. Residues 450-463 (FEKKDDMASKKELE) are compositionally biased toward basic and acidic residues. Residues 450–471 (FEKKDDMASKKELEPVPPVSKS) are disordered.

It belongs to the methyltransferase superfamily. METL family.

It localises to the mitochondrion inner membrane. Functionally, mitochondrial methyltransferase which suppresses respiratory defects caused by OXA1 mutations when overexpressed. This Saccharomyces cerevisiae (strain ATCC 204508 / S288c) (Baker's yeast) protein is Methyltransferase OMS1, mitochondrial (OMS1).